The primary structure comprises 141 residues: Granulocyte-macrophage colony-stimulating factor (141 aa).

Positions 1-17 (MWLQNLLFLGIVVYSLS) are cleaved as a signal peptide. Ser-22 carries an O-linked (GalNAc...) serine glycan. O-linked (GalNAc...) threonine glycosylation is present at Thr-27. Intrachain disulfides connect Cys-68–Cys-110 and Cys-102–Cys-135. Asn-83 and Asn-92 each carry an N-linked (GlcNAc...) asparagine glycan.

Belongs to the GM-CSF family. As to quaternary structure, monomer. The signaling GM-CSF receptor complex is a dodecamer of two head-to-head hexamers of two alpha, two beta, and two ligand subunits.

It localises to the secreted. In terms of biological role, cytokine that stimulates the growth and differentiation of hematopoietic precursor cells from various lineages, including granulocytes, macrophages, eosinophils and erythrocytes. This Mus musculus (Mouse) protein is Granulocyte-macrophage colony-stimulating factor (Csf2).